The sequence spans 288 residues: ATP synthase gamma chain (288 aa).

This sequence belongs to the ATPase gamma chain family. In terms of assembly, F-type ATPases have 2 components, CF(1) - the catalytic core - and CF(0) - the membrane proton channel. CF(1) has five subunits: alpha(3), beta(3), gamma(1), delta(1), epsilon(1). CF(0) has three main subunits: a, b and c.

The protein resides in the cell inner membrane. Its function is as follows. Produces ATP from ADP in the presence of a proton gradient across the membrane. The gamma chain is believed to be important in regulating ATPase activity and the flow of protons through the CF(0) complex. This chain is ATP synthase gamma chain, found in Trichlorobacter lovleyi (strain ATCC BAA-1151 / DSM 17278 / SZ) (Geobacter lovleyi).